The chain runs to 806 residues: U3 small nucleolar RNA-associated protein 17 (806 aa).

4 WD repeats span residues 266–305, 448–489, 499–538, and 598–635; these read WHAN…RQFL, RNGL…KTWV, GNLE…SAWK, and PHGG…VQWT.

As to quaternary structure, component of the ribosomal small subunit (SSU) processome.

It is found in the nucleus. It localises to the nucleolus. Functionally, involved in nucleolar processing of pre-18S ribosomal RNA. Required for optimal pre-ribosomal RNA transcription by RNA polymerase I together with a subset of U3 proteins required for transcription (t-UTPs). The sequence is that of U3 small nucleolar RNA-associated protein 17 (utp17) from Schizosaccharomyces pombe (strain 972 / ATCC 24843) (Fission yeast).